We begin with the raw amino-acid sequence, 643 residues long: Thread biopolymer filament subunit alpha (643 aa).

Positions Met1–Lys13 are enriched in polar residues. The segment at Met1–Gly34 is disordered. The segment at Met1 to Arg191 is head. The segment covering Ser14 to Lys31 has biased composition (low complexity). Residues Glu192 to Ile510 enclose the IF rod domain. The segment at Lys193 to Ile227 is coil 1A. Positions Thr228–Thr240 are linker 1. Positions Ala241–Ala341 are coil 1B. Residues Ala342–Ile362 form a linker 12 region. Residues Asp363–Lys381 are coil 2A. The segment at Ser382–Gln389 is linker 2. Residues Val390–Ile510 form a coil 2B region. Residues Ser511–Tyr643 are tail. Positions Ser622 to Tyr643 are disordered.

Belongs to the intermediate filament family. In terms of assembly, coiled-coil heterodimer of an alpha and a gamma subunit. Assemble into 10 nm filaments. Forms a massive, conical, intermediate filament biopolymer of approximately 60 cm.

It is found in the secreted. The protein localises to the extracellular space. Functionally, released extracellularly into seawater and provides physical and biological defense against invasive organism by modulation of the viscoelastic properties of mucus. This chain is Thread biopolymer filament subunit alpha, found in Eptatretus stoutii (Pacific hagfish).